The sequence spans 106 residues: Pyrimidine/purine nucleoside phosphorylase (106 aa).

Belongs to the nucleoside phosphorylase PpnP family.

The enzyme catalyses a purine D-ribonucleoside + phosphate = a purine nucleobase + alpha-D-ribose 1-phosphate. It catalyses the reaction adenosine + phosphate = alpha-D-ribose 1-phosphate + adenine. The catalysed reaction is cytidine + phosphate = cytosine + alpha-D-ribose 1-phosphate. It carries out the reaction guanosine + phosphate = alpha-D-ribose 1-phosphate + guanine. The enzyme catalyses inosine + phosphate = alpha-D-ribose 1-phosphate + hypoxanthine. It catalyses the reaction thymidine + phosphate = 2-deoxy-alpha-D-ribose 1-phosphate + thymine. The catalysed reaction is uridine + phosphate = alpha-D-ribose 1-phosphate + uracil. It carries out the reaction xanthosine + phosphate = alpha-D-ribose 1-phosphate + xanthine. In terms of biological role, catalyzes the phosphorolysis of diverse nucleosides, yielding D-ribose 1-phosphate and the respective free bases. Can use uridine, adenosine, guanosine, cytidine, thymidine, inosine and xanthosine as substrates. Also catalyzes the reverse reactions. This Burkholderia ambifaria (strain ATCC BAA-244 / DSM 16087 / CCUG 44356 / LMG 19182 / AMMD) (Burkholderia cepacia (strain AMMD)) protein is Pyrimidine/purine nucleoside phosphorylase.